The sequence spans 127 residues: Major sperm protein 33 (127 aa).

Residue A2 is modified to N-acetylalanine. One can recognise an MSP domain in the interval 9–126 (DIQTQPGTKI…RRKNLPIEYN (118 aa)).

Sperm.

It is found in the cell projection. It localises to the pseudopodium. Its subcellular location is the cytoplasm. The protein resides in the cytoskeleton. In terms of biological role, central component in molecular interactions underlying sperm crawling. Forms an extensive filament system that extends from sperm villipoda, along the leading edge of the pseudopod. The polypeptide is Major sperm protein 33 (msp-33) (Caenorhabditis elegans).